Consider the following 320-residue polypeptide: Taste receptor type 2 member 109 (320 aa).

The Extracellular segment spans residues 1–14 (MEHFLKSIFDISKN). The chain crosses the membrane as a helical span at residues 15–35 (VLPIILFIELIIGIIGNGFMA). Topologically, residues 36-62 (LVHCMDWVKRKKMSLVNQILTTLATSR) are cytoplasmic. Residues 63-83 (ICLLWFMLLGLLITLLDPDLA) form a helical membrane-spanning segment. The Extracellular portion of the chain corresponds to 84–94 (SARMMIQVASN). Residues 95 to 115 (LWIIANHMSIWLATCLTVFYF) form a helical membrane-spanning segment. The Cytoplasmic portion of the chain corresponds to 116–135 (LKIANFSSSLFLYLKWRVEK). The chain crosses the membrane as a helical span at residues 136-156 (VISVIFLVSLVLLFLNMLLMN). The Extracellular segment spans residues 157–191 (LENDMCIAEYHQINISYSFIYHYRADCERRVLRLH). Residue Asn170 is glycosylated (N-linked (GlcNAc...) asparagine). The helical transmembrane segment at 192–212 (IIILSVPFVLSLPTFLLLIFS) threads the bilayer. At 213-240 (LWTHHKKMQQHVQGRRDASTTAHFKALQ) the chain is on the cytoplasmic side. The helical transmembrane segment at 241-261 (TVIAFLLLYCIFILSMLLQFW) threads the bilayer. Residues 262 to 270 (KYELMKKPL) lie on the Extracellular side of the membrane. The chain crosses the membrane as a helical span at residues 271 to 291 (FILFCHIVYGAFPSFHSYVLI). Topologically, residues 292–320 (LGDMKLRQASLSVLLWLKCRPNYIETLDL) are cytoplasmic.

The protein belongs to the G-protein coupled receptor T2R family.

The protein localises to the membrane. Its function is as follows. Putative taste receptor which may play a role in the perception of bitterness. In Rattus norvegicus (Rat), this protein is Taste receptor type 2 member 109.